Consider the following 958-residue polypeptide: Valine--tRNA ligase (958 aa).

Positions proline 45–histidine 55 match the 'HIGH' region motif. The 'KMSKS' region signature appears at lysine 571–serine 575. An ATP-binding site is contributed by lysine 574. Residues alanine 892–serine 958 adopt a coiled-coil conformation.

This sequence belongs to the class-I aminoacyl-tRNA synthetase family. ValS type 1 subfamily. In terms of assembly, monomer.

It localises to the cytoplasm. It carries out the reaction tRNA(Val) + L-valine + ATP = L-valyl-tRNA(Val) + AMP + diphosphate. In terms of biological role, catalyzes the attachment of valine to tRNA(Val). As ValRS can inadvertently accommodate and process structurally similar amino acids such as threonine, to avoid such errors, it has a 'posttransfer' editing activity that hydrolyzes mischarged Thr-tRNA(Val) in a tRNA-dependent manner. This Bradyrhizobium diazoefficiens (strain JCM 10833 / BCRC 13528 / IAM 13628 / NBRC 14792 / USDA 110) protein is Valine--tRNA ligase.